A 278-amino-acid chain; its full sequence is 4-deoxy-L-threo-5-hexosulose-uronate ketol-isomerase (278 aa).

Positions 196, 198, 203, and 245 each coordinate Zn(2+).

The protein belongs to the KduI family. The cofactor is Zn(2+).

The catalysed reaction is 5-dehydro-4-deoxy-D-glucuronate = 3-deoxy-D-glycero-2,5-hexodiulosonate. It functions in the pathway glycan metabolism; pectin degradation; 2-dehydro-3-deoxy-D-gluconate from pectin: step 4/5. Functionally, catalyzes the isomerization of 5-dehydro-4-deoxy-D-glucuronate to 3-deoxy-D-glycero-2,5-hexodiulosonate. The protein is 4-deoxy-L-threo-5-hexosulose-uronate ketol-isomerase of Enterobacter sp. (strain 638).